The primary structure comprises 556 residues: Arginine--tRNA ligase (556 aa).

A 'HIGH' region motif is present at residues 132 to 142 (ANPTGSLHLGH).

It belongs to the class-I aminoacyl-tRNA synthetase family. Monomer.

The protein resides in the cytoplasm. It catalyses the reaction tRNA(Arg) + L-arginine + ATP = L-arginyl-tRNA(Arg) + AMP + diphosphate. This chain is Arginine--tRNA ligase, found in Anoxybacillus flavithermus (strain DSM 21510 / WK1).